An 813-amino-acid chain; its full sequence is Protein tramtrack, alpha isoform (813 aa).

Residues 33 to 98 (TDVTLAVEGQ…MYRGEVSVDQ (66 aa)) form the BTB domain. Disordered regions lie at residues 118 to 148 (EVNDDKPSPAAAAAGAGATGSESTATTPQLQ), 171 to 324 (ANAG…GPSE), 356 to 428 (TTPA…MPKK), and 526 to 585 (AGLP…LDDQ). Positions 125–145 (SPAAAAAGAGATGSESTATTP) are enriched in low complexity. The span at 176–187 (TPTLPVQPSLLS) shows a compositional bias: polar residues. A compositionally biased stretch (basic residues) spans 192–201 (PKRKRGRPRK). A phosphoserine mark is found at serine 203, serine 205, and serine 206. A Phosphothreonine modification is found at threonine 209. The span at 254–285 (HTDDLNESRDSLPSKRSKNSKDHRVVSHHEDN) shows a compositional bias: basic and acidic residues. Composition is skewed to polar residues over residues 302 to 324 (LFGSSSTTISATAPGGSSTGPSE), 356 to 369 (TTPAQQGSPQTPTK), and 377 to 388 (ATGSNNSNSLLK). Over residues 560–578 (SGKKGAKRPIQRRRVRRKA) the composition is skewed to basic residues. 2 consecutive C2H2-type zinc fingers follow at residues 610 to 638 (YRCTECAKENMQKTFKNKYSFQRHAFLYH) and 646 to 669 (FPCPVCSKEFSRPDKMKNHLKMTH). The residue at position 682 (serine 682) is a Phosphoserine.

Interacts with CoRest/CG33525, suggesting that it acts by recruiting a CoRest-containing corepressor complex. Interacts with phyl.

It is found in the nucleus. Its function is as follows. Binds to a number of sites in the transcriptional regulatory region of ftz. Isoform alpha is required to repress genes that promote the R7 cell fate. Probable repressor of the transcription of the segmentation genes ftz, eve, h, odd, run, and en. May bind to the region 5'-AGGG[CT]GG-3'. Degradation of ttk is directed by binding of sinah or sina, via the adapter molecule phyl which binds to the BTB domain of ttk. This is Protein tramtrack, alpha isoform (ttk) from Drosophila melanogaster (Fruit fly).